We begin with the raw amino-acid sequence, 406 residues long: MAAPGARRPLLLLLLAGLAHGASALFEVKNNGTTCIMASFSASFLTTYETANGSQIVNISLPASAEVLKNGSSCGKENVSDPSLTITFGRGYLLTLNFTKNTTRYSVQHMYFTYNLSDTEHFPNAISKEIYTMDSTTDIKADINKAYRCVSDIRVYMKNVTVVLRDATIQAYLSSGNFSKEETHCTQDGPSPTTGPPSPSPPLVPTNPTVSKYNVTGNNGTCLLASMALQLNITYLKKDNKTVTRAFNISPNDTSSGSCGINLVTLKVENKNRALELQFGMNASSSLFFLQGVRLNMTLPDALVPTFSISNHSLKALQATVGNSYKCNTEEHIFVSKMLSLNVFSVQVQAFKVDSDRFGSVEECVQDGNNMLIPIAVGGALAGLVLIVLIAYLIGRKRSHAGYQTI.

The N-terminal stretch at 1-24 is a signal peptide; sequence MAAPGARRPLLLLLLAGLAHGASA. The segment at 25–188 is first lumenal domain; that stretch reads LFEVKNNGTT…SKEETHCTQD (164 aa). Topologically, residues 25–370 are lumenal; it reads LFEVKNNGTT…VEECVQDGNN (346 aa). Residues Asn31, Asn52, Asn58, Asn70, Asn78, Asn97, Asn101, Asn115, Asn159, and Asn177 are each glycosylated (N-linked (GlcNAc...) asparagine). Cys35 and Cys74 are oxidised to a cystine. Cys149 and Cys185 are oxidised to a cystine. The interval 180–207 is disordered; it reads KEETHCTQDGPSPTTGPPSPSPPLVPTN. The segment at 189 to 218 is hinge; it reads GPSPTTGPPSPSPPLVPTNPTVSKYNVTGN. A compositionally biased stretch (pro residues) spans 193 to 205; that stretch reads TTGPPSPSPPLVP. N-linked (GlcNAc...) asparagine glycosylation is found at Asn214, Asn219, Asn232, and Asn240. Residues 219–370 form a second lumenal domain region; it reads NGTCLLASMA…VEECVQDGNN (152 aa). Cys222 and Cys259 are oxidised to a cystine. Asn252 carries an N-linked (GlcNAc...) (high mannose) asparagine glycan. Asn282, Asn296, and Asn311 each carry an N-linked (GlcNAc...) asparagine glycan. A disulfide bond links Cys327 and Cys364. The chain crosses the membrane as a helical span at residues 371 to 394; that stretch reads MLIPIAVGGALAGLVLIVLIAYLI. The Cytoplasmic segment spans residues 395-406; that stretch reads GRKRSHAGYQTI.

This sequence belongs to the LAMP family. As to quaternary structure, interacts with ABCB9; this interaction strongly stabilizes ABCB9 and protects ABCB9 against lysosomal degradation. Interacts with FURIN. Interacts with TMEM175; inhibiting the proton channel activity of TMEM175. O- and N-glycosylated; some of the N-glycans attached to LAMP-1 are polylactosaminoglycans.

The protein resides in the lysosome membrane. It is found in the endosome membrane. Its subcellular location is the late endosome membrane. It localises to the cell membrane. The protein localises to the cytolytic granule membrane. Lysosomal membrane glycoprotein which plays an important role in lysosome biogenesis, lysosomal pH regulation, autophagy and cholesterol homeostasis. Acts as an important regulator of lysosomal lumen pH regulation by acting as a direct inhibitor of the proton channel TMEM175, facilitating lysosomal acidification for optimal hydrolase activity. Also plays an important role in NK-cells cytotoxicity. Mechanistically, participates in cytotoxic granule movement to the cell surface and perforin trafficking to the lytic granule. In addition, protects NK-cells from degranulation-associated damage induced by their own cytotoxic granule content. Presents carbohydrate ligands to selectins. Also implicated in tumor cell metastasis. The chain is Lysosome-associated membrane glycoprotein 1 (Lamp1) from Mus musculus (Mouse).